The following is a 1102-amino-acid chain: GPI inositol-deacylase (1102 aa).

The disordered stretch occupies residues methionine 1–valine 90. Residues glycine 58–tryptophan 70 show a composition bias toward polar residues. Asparagine 66 is a glycosylation site (N-linked (GlcNAc...) asparagine). Over residues threonine 72 to proline 83 the composition is skewed to low complexity. A helical transmembrane segment spans residues proline 121–leucine 141. Residue serine 308 is part of the active site. Transmembrane regions (helical) follow at residues leucine 744–methionine 764 and serine 790–threonine 810. A glycan (N-linked (GlcNAc...) asparagine) is linked at asparagine 824. 6 helical membrane-spanning segments follow: residues valine 867 to glycine 887, isoleucine 914 to isoleucine 934, serine 964 to alanine 984, valine 1001 to proline 1021, methionine 1033 to leucine 1053, and leucine 1056 to leucine 1076.

It belongs to the GPI inositol-deacylase family.

It localises to the endoplasmic reticulum membrane. Its function is as follows. Involved in inositol deacylation of GPI-anchored proteins which plays important roles in the quality control and ER-associated degradation of GPI-anchored proteins. The chain is GPI inositol-deacylase (bst1) from Aspergillus oryzae (strain ATCC 42149 / RIB 40) (Yellow koji mold).